We begin with the raw amino-acid sequence, 567 residues long: Urease subunit alpha (567 aa).

A Urease domain is found at 128-567 (GGIDAHVHFI…LPMSQRYFLF (440 aa)). Ni(2+)-binding residues include H133, H135, and K216. At K216 the chain carries N6-carboxylysine. Position 218 (H218) interacts with substrate. 2 residues coordinate Ni(2+): H245 and H271. H319 functions as the Proton donor in the catalytic mechanism. Residue D359 participates in Ni(2+) binding.

Belongs to the metallo-dependent hydrolases superfamily. Urease alpha subunit family. In terms of assembly, heterotrimer of UreA (gamma), UreB (beta) and UreC (alpha) subunits. Three heterotrimers associate to form the active enzyme. It depends on Ni cation as a cofactor. In terms of processing, carboxylation allows a single lysine to coordinate two nickel ions.

It localises to the cytoplasm. It catalyses the reaction urea + 2 H2O + H(+) = hydrogencarbonate + 2 NH4(+). It participates in nitrogen metabolism; urea degradation; CO(2) and NH(3) from urea (urease route): step 1/1. In Blochmanniella pennsylvanica (strain BPEN), this protein is Urease subunit alpha.